The sequence spans 623 residues: C2H2-type transcription factor zfpA (623 aa).

Over residues 202–219 (GLAVSSPMPNSGPHSRSV) the composition is skewed to polar residues. 2 disordered regions span residues 202 to 256 (GLAV…EKGR) and 468 to 493 (SNKANSSLGSRPIMGNHNAVTKNGKA). Positions 227–239 (SISSTNSRRSQLS) are enriched in low complexity. The segment at 255–276 (GRCPHPDCGRVFKDLKAHMLTH) adopts a C2H2-type zinc-finger fold.

Its subcellular location is the nucleus. Functionally, transcription factor involved in fungal growth and virulence potential. Negatively regulates antifungal drug susceptibility via transcriptional inhibition of the expressions of drug efflux pumps in a crzA-dependent way. Under the treatment of azoles, both zfpA and crzA transfer to nuclei and coregulate the expression of multidrug transporters and then keep normal drug susceptibility in fungal cells. This Aspergillus fumigatus (strain CBS 144.89 / FGSC A1163 / CEA10) (Neosartorya fumigata) protein is C2H2-type transcription factor zfpA.